The sequence spans 396 residues: S-adenosylmethionine synthase (396 aa).

Residue His-16 participates in ATP binding. A Mg(2+)-binding site is contributed by Asp-18. Glu-44 lines the K(+) pocket. Residues Glu-57 and Gln-100 each contribute to the L-methionine site. The flexible loop stretch occupies residues 100–110; the sequence is QSVDIAQGVDR. ATP-binding positions include 165-167, Asp-240, 246-247, Ala-263, and Lys-267; these read DAK and RK. An L-methionine-binding site is contributed by Asp-240. Residue Lys-271 participates in L-methionine binding.

The protein belongs to the AdoMet synthase family. In terms of assembly, homotetramer; dimer of dimers. The cofactor is Mg(2+). Requires K(+) as cofactor.

It localises to the cytoplasm. It catalyses the reaction L-methionine + ATP + H2O = S-adenosyl-L-methionine + phosphate + diphosphate. It functions in the pathway amino-acid biosynthesis; S-adenosyl-L-methionine biosynthesis; S-adenosyl-L-methionine from L-methionine: step 1/1. Functionally, catalyzes the formation of S-adenosylmethionine (AdoMet) from methionine and ATP. The overall synthetic reaction is composed of two sequential steps, AdoMet formation and the subsequent tripolyphosphate hydrolysis which occurs prior to release of AdoMet from the enzyme. This is S-adenosylmethionine synthase from Pseudomonas putida (strain ATCC 700007 / DSM 6899 / JCM 31910 / BCRC 17059 / LMG 24140 / F1).